The chain runs to 25 residues: Xenoposin precursor fragment BM1 (25 aa).

As to expression, expressed by the skin glands.

The protein resides in the secreted. Functionally, antimicrobial peptide. The protein is Xenoposin precursor fragment BM1 of Xenopus boumbaensis (Mawa clawed frog).